Consider the following 102-residue polypeptide: Small ribosomal subunit protein eS24 (102 aa).

The protein belongs to the eukaryotic ribosomal protein eS24 family.

The polypeptide is Small ribosomal subunit protein eS24 (Methanobrevibacter smithii (strain ATCC 35061 / DSM 861 / OCM 144 / PS)).